Here is a 273-residue protein sequence, read N- to C-terminus: uncharacterized protein (273 aa).

This is an uncharacterized protein from Methanocaldococcus jannaschii (strain ATCC 43067 / DSM 2661 / JAL-1 / JCM 10045 / NBRC 100440) (Methanococcus jannaschii).